Consider the following 135-residue polypeptide: Small ribosomal subunit protein uS8 (135 aa).

The protein belongs to the universal ribosomal protein uS8 family. In terms of assembly, part of the 30S ribosomal subunit. Contacts proteins S5 and S12.

Its function is as follows. One of the primary rRNA binding proteins, it binds directly to 16S rRNA central domain where it helps coordinate assembly of the platform of the 30S subunit. The protein is Small ribosomal subunit protein uS8 of Cutibacterium acnes (strain DSM 16379 / KPA171202) (Propionibacterium acnes).